The following is a 132-amino-acid chain: Ribosome-binding factor A (132 aa).

Belongs to the RbfA family. As to quaternary structure, monomer. Binds 30S ribosomal subunits, but not 50S ribosomal subunits or 70S ribosomes.

It is found in the cytoplasm. One of several proteins that assist in the late maturation steps of the functional core of the 30S ribosomal subunit. Associates with free 30S ribosomal subunits (but not with 30S subunits that are part of 70S ribosomes or polysomes). Required for efficient processing of 16S rRNA. May interact with the 5'-terminal helix region of 16S rRNA. In Teredinibacter turnerae (strain ATCC 39867 / T7901), this protein is Ribosome-binding factor A.